Here is a 224-residue protein sequence, read N- to C-terminus: ATP phosphoribosyltransferase (224 aa).

Belongs to the ATP phosphoribosyltransferase family. Short subfamily. In terms of assembly, heteromultimer composed of HisG and HisZ subunits.

The protein localises to the cytoplasm. It catalyses the reaction 1-(5-phospho-beta-D-ribosyl)-ATP + diphosphate = 5-phospho-alpha-D-ribose 1-diphosphate + ATP. It participates in amino-acid biosynthesis; L-histidine biosynthesis; L-histidine from 5-phospho-alpha-D-ribose 1-diphosphate: step 1/9. Catalyzes the condensation of ATP and 5-phosphoribose 1-diphosphate to form N'-(5'-phosphoribosyl)-ATP (PR-ATP). Has a crucial role in the pathway because the rate of histidine biosynthesis seems to be controlled primarily by regulation of HisG enzymatic activity. This chain is ATP phosphoribosyltransferase, found in Cupriavidus metallidurans (strain ATCC 43123 / DSM 2839 / NBRC 102507 / CH34) (Ralstonia metallidurans).